A 128-amino-acid polypeptide reads, in one-letter code: Holin-like protein CidA (128 aa).

The next 3 helical transmembrane spans lie at 23 to 43, 58 to 78, and 84 to 104; these read LIVE…IVIF, IGAL…AVGI, and ILAE…FVVM.

The protein belongs to the CidA/LrgA family. CidA subfamily.

Its subcellular location is the cell membrane. Its function is as follows. Increases the activity of extracellular murein hydrolases possibly by mediating their export via hole formation. Inhibited by the antiholin-like proteins LrgAB. In an unstressed cell, the LrgAB products probably inhibit the function of the CidA protein. When a cell is stressed by the addition of antibiotics or by other factors in the environment, CidA possibly oligomerizes within the bacterial cell membrane, creating lesions that disrupt the proton motive force, which in turn results in loss of cell viability. These lesions are also hypothesized to regulate the subsequent cell lysis by either allowing the murein hydrolases access to the cell wall substrate and/or regulating their activity by a possible change in the cell wall pH that results from loss of membrane potential. In Bacillus licheniformis (strain ATCC 14580 / DSM 13 / JCM 2505 / CCUG 7422 / NBRC 12200 / NCIMB 9375 / NCTC 10341 / NRRL NRS-1264 / Gibson 46), this protein is Holin-like protein CidA.